The following is a 180-amino-acid chain: Large ribosomal subunit protein uL5c (180 aa).

It belongs to the universal ribosomal protein uL5 family. In terms of assembly, part of the 50S ribosomal subunit; contacts the 5S rRNA.

Its subcellular location is the plastid. The protein resides in the chloroplast. Binds 5S rRNA, forms part of the central protuberance of the 50S subunit. The chain is Large ribosomal subunit protein uL5c (rpl5) from Oltmannsiellopsis viridis (Marine flagellate).